The sequence spans 965 residues: MSKPQRLSAAQTAGARINRDEALTLTVDGQQLSAFRGDTVASAMLANGLRSCGNSMYLDRPRGIFSAGVEEPNALITVGARHQADINESMLPATTVSVTDGLNATLLSGLGVLDPSEDPAYYDHVHVHTDVLVVGAGPAGLAAAREASRSGARVMLLDERPEAGGTLREASGEQIDGIDAAQWIDAVTEELAAAEETTHLQRTTVFGSYDANYILAAQRRTVHLDGPSGQGVSRERIWHIRAKQVVLATAAHERPIVFENNDRPGIMLAGSVRSYLNRFGVRAGSKIAVATTNDSVYPLVSELAASGGVVAVIDARQNISAAAAQAVTDGVTVLTGSVVANTEADASGELSAVLVATLDEQRNLGEAQRFEADVLAVSGGFNPVVHLHSQRQGKLNWDTSIHAFVPADAVANQHLAGALTGLLDTASALSTGAATGAAAASAAGFEKIAEVPQALAVPAGETRPVWLVPSLSGDDAVHYKFHFVDLQRDQTVADVLRATGAGMQSVEHIKRYTSISTANDQGKTSGVAAIGVIAAVLGIENPAQIGTTTFRAPYTPVSFAALAGRTRGELLDPARLTAMHPWHLAHGAKFEDVGQWKRPWYYPQDGESMDEAVYRECKAVRDSVGMLDASTLGKIEIRGKDAAEFLNRMYTNGYTKLKVGMGRYGVMCKADGMIFDDGVTLRLAEDRFLMHTTTGGAADVLDWLEEWLQTEWPELDVTCTSVTEQLATVAVVGPRSRDVIAKLASSLDVSNDAFKFMAFQDVTLDSGIEARISRISFSGELAFEIAIPAWHGLQVWEDVYAAGQEFNITPYGTETMHVLRAEKGFIIVGQDTDGTVTPQDAGMEWVVSKLKDFVGKRSFSREDNVREDRKHLVSVLPVDSSLRLAEGAALVAADAVASEGVTPMEGWVTHAYNSPALGRTFGLALIKNGRNRIGEVLKTPVDGQLVDVQVSDLVLFDPEGSRRDG.

Residues A139, D158, E159, R160, T166, V205, A418, L423, and T425 each contribute to the NAD(+) site. Residues T692 and E784 each coordinate (6R)-5,10-methylene-5,6,7,8-tetrahydrofolate.

Belongs to the GcvT family. As to quaternary structure, heterotetramer composed of subunits alpha (SoxA), beta (SoxB), gamma (SoxG) and delta (SoxD). NAD(+) serves as cofactor.

It is found in the cytoplasm. The catalysed reaction is sarcosine + (6S)-5,6,7,8-tetrahydrofolate + O2 = (6R)-5,10-methylene-5,6,7,8-tetrahydrofolate + glycine + H2O2. It carries out the reaction sarcosine + O2 + H2O = formaldehyde + glycine + H2O2. Its activity is regulated as follows. Inhibited by Zn(2+), Cu(2+), Cd(2+), Hg(2+), Ag(+), p-chloromercuribenzoate (p-CMB), iodoacetamide, N-ethylmaleimide, CN(-), o-phenanthroline and sodium lauryl sulfate. In the presence of tetrahydrofolate, catalyzes the oxidative demethylation of sarcosine to yield glycine, 5,10-methylenetetrahydrofolate and hydrogen peroxide. In the absence of tetrahydrofolate, catalyzes the oxidative demethylation of sarcosine to yield glycine, formaldehyde and hydrogen peroxide. Can also use N-methyl-L-alanine and N-ethyl-L-glycine. Is very specific for oxygen as an acceptor. The polypeptide is Sarcosine oxidase subunit alpha (Corynebacterium sp. (strain U-96)).